The primary structure comprises 890 residues: Phosphotransferase RcsD (890 aa).

At 1–21 the chain is on the cytoplasmic side; it reads MRQKETTATTRFSLLPGSITR. A helical membrane pass occupies residues 22 to 42; the sequence is FFLLLIIVLLVTMGVMVQSAV. The Periplasmic segment spans residues 43 to 308; that stretch reads NAWLKDKSYQ…GTLLLDTLQN (266 aa). The helical transmembrane segment at 309–329 threads the bilayer; sequence ILLPLLLNIGLLALALFGYTT. Over 330 to 890 the chain is Cytoplasmic; sequence FRHFSSRSTE…DIDSYVKSLL (561 aa). The histidine-like kinase stretch occupies residues 468 to 678; that stretch reads NIGDALKEPA…RYSVHIKMLA (211 aa). An HPt domain is found at 803–890; the sequence is AQLHASGYYA…DIDSYVKSLL (88 aa). A Phosphohistidine modification is found at histidine 842.

Belongs to the RcsD family. Interacts with RcsC and RcsB. Has a higher affinity for RcsB than for RcsC. Post-translationally, phosphorylated by RcsC.

Its subcellular location is the cell inner membrane. Functionally, component of the Rcs signaling system, which controls transcription of numerous genes. RcsD is a phosphotransfer intermediate between the sensor kinase RcsC and the response regulator RcsB. It acquires a phosphoryl group from RcsC and transfers it to RcsB. The system controls expression of genes involved in colanic acid capsule synthesis, biofilm formation and cell division. The protein is Phosphotransferase RcsD of Escherichia coli (strain K12).